A 337-amino-acid polypeptide reads, in one-letter code: tRNA N6-adenosine threonylcarbamoyltransferase (337 aa).

Fe cation-binding residues include H111 and H115. Substrate is bound by residues 134–138, D167, G180, and N272; that span reads LVSGG. D300 is a binding site for Fe cation.

Belongs to the KAE1 / TsaD family. It depends on Fe(2+) as a cofactor.

The protein resides in the cytoplasm. The catalysed reaction is L-threonylcarbamoyladenylate + adenosine(37) in tRNA = N(6)-L-threonylcarbamoyladenosine(37) in tRNA + AMP + H(+). Required for the formation of a threonylcarbamoyl group on adenosine at position 37 (t(6)A37) in tRNAs that read codons beginning with adenine. Is involved in the transfer of the threonylcarbamoyl moiety of threonylcarbamoyl-AMP (TC-AMP) to the N6 group of A37, together with TsaE and TsaB. TsaD likely plays a direct catalytic role in this reaction. The chain is tRNA N6-adenosine threonylcarbamoyltransferase from Salmonella typhi.